The sequence spans 507 residues: Maturase K (507 aa).

The protein belongs to the intron maturase 2 family. MatK subfamily.

It is found in the plastid. The protein localises to the chloroplast. In terms of biological role, usually encoded in the trnK tRNA gene intron. Probably assists in splicing its own and other chloroplast group II introns. This Magnolia champaca (Yellow jade orchid tree) protein is Maturase K.